Reading from the N-terminus, the 34-residue chain is Photosystem II reaction center protein Psb30 (34 aa).

The chain crosses the membrane as a helical span at residues 7 to 27 (VAQLLALFVIITSGPAIIILI).

This sequence belongs to the Psb30/Ycf12 family. PSII is composed of 1 copy each of membrane proteins PsbA, PsbB, PsbC, PsbD, PsbE, PsbF, PsbH, PsbI, PsbJ, PsbK, PsbL, PsbM, PsbT, PsbX, PsbY, PsbZ, Psb30/Ycf12, peripheral proteins of the oxygen-evolving complex and a large number of cofactors. It forms dimeric complexes.

The protein resides in the plastid. Its subcellular location is the chloroplast thylakoid membrane. Its function is as follows. A core subunit of photosystem II (PSII), probably helps stabilize the reaction center. This is Photosystem II reaction center protein Psb30 from Guillardia theta (Cryptophyte).